The following is a 424-amino-acid chain: Histidine--tRNA ligase (424 aa).

The protein belongs to the class-II aminoacyl-tRNA synthetase family. As to quaternary structure, homodimer.

It is found in the cytoplasm. The enzyme catalyses tRNA(His) + L-histidine + ATP = L-histidyl-tRNA(His) + AMP + diphosphate + H(+). The sequence is that of Histidine--tRNA ligase from Pectobacterium carotovorum subsp. carotovorum (strain PC1).